Consider the following 129-residue polypeptide: NADPH-dependent 7-cyano-7-deazaguanine reductase (129 aa).

The Thioimide intermediate role is filled by Cys43. The Proton donor role is filled by Asp50. Residues 65 to 67 (VEL) and 84 to 85 (HE) contribute to the substrate site.

It belongs to the GTP cyclohydrolase I family. QueF type 1 subfamily.

The protein resides in the cytoplasm. The catalysed reaction is 7-aminomethyl-7-carbaguanine + 2 NADP(+) = 7-cyano-7-deazaguanine + 2 NADPH + 3 H(+). It participates in tRNA modification; tRNA-queuosine biosynthesis. In terms of biological role, catalyzes the NADPH-dependent reduction of 7-cyano-7-deazaguanine (preQ0) to 7-aminomethyl-7-deazaguanine (preQ1). In Aquifex aeolicus (strain VF5), this protein is NADPH-dependent 7-cyano-7-deazaguanine reductase.